A 169-amino-acid polypeptide reads, in one-letter code: uncharacterized protein (169 aa).

This is an uncharacterized protein from Autographa californica nuclear polyhedrosis virus (AcMNPV).